The chain runs to 757 residues: uncharacterized protein (757 aa).

One can recognise an S1 motif domain in the interval 640–709; the sequence is GMILEGVVSN…ARKRIALTMR (70 aa). Positions 710–741 are enriched in basic and acidic residues; that stretch reads LDDEPGGAKHKMPSENRSRERTAGRKPQRNDR. The segment at 710 to 757 is disordered; sequence LDDEPGGAKHKMPSENRSRERTAGRKPQRNDRAPANSAMADAFAKLKR.

This is an uncharacterized protein from Neisseria meningitidis serogroup A / serotype 4A (strain DSM 15465 / Z2491).